The sequence spans 22 residues: MXKAVAVLTGSEGVXGTIFFTQ.

Belongs to the Cu-Zn superoxide dismutase family. In terms of assembly, homodimer. Requires Cu cation as cofactor. The cofactor is Zn(2+).

The protein localises to the cytoplasm. The catalysed reaction is 2 superoxide + 2 H(+) = H2O2 + O2. Functionally, destroys radicals which are normally produced within the cells and which are toxic to biological systems. This Hordeum vulgare (Barley) protein is Superoxide dismutase [Cu-Zn].